A 311-amino-acid chain; its full sequence is Chalcone synthase 4 (311 aa).

Residue Cys-164 is part of the active site.

Belongs to the thiolase-like superfamily. Chalcone/stilbene synthases family.

The catalysed reaction is (E)-4-coumaroyl-CoA + 3 malonyl-CoA + 3 H(+) = 2',4,4',6'-tetrahydroxychalcone + 3 CO2 + 4 CoA. It functions in the pathway secondary metabolite biosynthesis; flavonoid biosynthesis. Functionally, the primary product of this enzyme is 4,2',4',6'-tetrahydroxychalcone (also termed naringenin-chalcone or chalcone) which can under specific conditions spontaneously isomerize into naringenin. This Trifolium subterraneum (Subterranean clover) protein is Chalcone synthase 4 (CHS4).